We begin with the raw amino-acid sequence, 348 residues long: Sesquiterpene synthase MGU_11447 (348 aa).

2 residues coordinate Mg(2+): aspartate 91 and aspartate 96. Positions 91–96 (DDLFVD) match the DDXXXD motif motif. Residue arginine 184 coordinates substrate. Residues asparagine 230, serine 234, and glutamate 238 each contribute to the Mg(2+) site.

The protein belongs to the terpene synthase family. It depends on Mg(2+) as a cofactor.

The enzyme catalyses (2E,6E)-farnesyl diphosphate + H2O = (+)-corvol ether B + diphosphate. The catalysed reaction is (2E,6E)-farnesyl diphosphate + H2O = (+)-corvol ether A + diphosphate. Terpene synthase that catalyzes the conversion of (2E,6E)-farnesyl diphosphate (FPP) into sesquiterpenes which are important for fungi-environment interactions. Produces a mixture consisting of 8 sesquiterpenes including corvol ethers A and B, as well as traces of epizonarene, gamma-cadinene, delta-cadinene, alpha-cadinene, alpha-cadinol, and an unidentified sesquiterpene. Produces both corvol ether A and corvol ether B in similar concentrations. The polypeptide is Sesquiterpene synthase MGU_11447 (Metarhizium guizhouense (strain ARSEF 977)).